The primary structure comprises 210 residues: Somatotropin (210 aa).

The signal sequence occupies residues 1–23 (MARVLVLLSVVLVSLLVNQGRAS). Residue His-38 coordinates Zn(2+). Cysteines 71 and 183 form a disulfide. Zn(2+) is bound at residue Glu-192. Cys-200 and Cys-208 are disulfide-bonded.

It belongs to the somatotropin/prolactin family.

It is found in the secreted. Growth hormone plays an important role in growth control. The chain is Somatotropin (gh) from Cyprinus carpio (Common carp).